Consider the following 601-residue polypeptide: Elongation factor 4 (601 aa).

The 183-residue stretch at 7–189 (KNIRNFSIVA…AIVTRLPPPQ (183 aa)) folds into the tr-type G domain. Residues 19-24 (DHGKST) and 136-139 (NKID) each bind GTP.

The protein belongs to the TRAFAC class translation factor GTPase superfamily. Classic translation factor GTPase family. LepA subfamily.

The protein localises to the cell inner membrane. It carries out the reaction GTP + H2O = GDP + phosphate + H(+). Functionally, required for accurate and efficient protein synthesis under certain stress conditions. May act as a fidelity factor of the translation reaction, by catalyzing a one-codon backward translocation of tRNAs on improperly translocated ribosomes. Back-translocation proceeds from a post-translocation (POST) complex to a pre-translocation (PRE) complex, thus giving elongation factor G a second chance to translocate the tRNAs correctly. Binds to ribosomes in a GTP-dependent manner. The polypeptide is Elongation factor 4 (Methylocella silvestris (strain DSM 15510 / CIP 108128 / LMG 27833 / NCIMB 13906 / BL2)).